The chain runs to 219 residues: Ribose-5-phosphate isomerase A (219 aa).

Residues 28-31 (SGST), 81-84 (DGAD), and 94-97 (KGGG) each bind substrate. E103 acts as the Proton acceptor in catalysis. Residue K121 coordinates substrate.

It belongs to the ribose 5-phosphate isomerase family. In terms of assembly, homodimer.

It carries out the reaction aldehydo-D-ribose 5-phosphate = D-ribulose 5-phosphate. The protein operates within carbohydrate degradation; pentose phosphate pathway; D-ribose 5-phosphate from D-ribulose 5-phosphate (non-oxidative stage): step 1/1. In terms of biological role, catalyzes the reversible conversion of ribose-5-phosphate to ribulose 5-phosphate. The polypeptide is Ribose-5-phosphate isomerase A (Actinobacillus succinogenes (strain ATCC 55618 / DSM 22257 / CCUG 43843 / 130Z)).